We begin with the raw amino-acid sequence, 169 residues long: Probable metallophosphoesterase YsnB (169 aa).

Mn(2+) contacts are provided by D8, H10, D35, N54, H78, H107, and H109.

It belongs to the metallophosphoesterase superfamily. YfcE family. The cofactor is Mn(2+).

This Bacillus subtilis (strain 168) protein is Probable metallophosphoesterase YsnB (ysnB).